Here is a 490-residue protein sequence, read N- to C-terminus: UDP-glycosyltransferase 84A1 (490 aa).

The active-site Proton acceptor is the H30. H30 lines the an anthocyanidin pocket. Residues Q358, H373, W376, N377, S378, and E381 each coordinate UDP-alpha-D-glucose. G396 is a binding site for an anthocyanidin. Residues D397 and Q398 each contribute to the UDP-alpha-D-glucose site.

This sequence belongs to the UDP-glycosyltransferase family. As to expression, expressed in roots, flowers and siliques.

It carries out the reaction (E)-4-coumarate + UDP-alpha-D-glucose = 4-O-(beta-D-glucosyl)-trans-4-coumarate + UDP + H(+). It catalyses the reaction (E)-ferulate + UDP-alpha-D-glucose = 1-O-[(E)-feruloyl]-beta-D-glucose + UDP. The enzyme catalyses (E)-caffeate + UDP-alpha-D-glucose = 1-O-[(E)-caffeoyl]-beta-D-glucose + UDP. The catalysed reaction is (E)-sinapate + UDP-alpha-D-glucose = 1-O-(trans-sinapoyl)-beta-D-glucose + UDP. It carries out the reaction (E)-cinnamate + UDP-alpha-D-glucose = 1-O-(trans-cinnamoyl)-beta-D-glucose + UDP. Functionally, UDP-glucosyltransferase that forms glucose esters with phenylpropanoids. Glucosylates 4-coumarate, ferulate, caffeate, sinapate and cinnamate. Can glucosylate the phytotoxic xenobiotic compound 2,4,5-trichlorophenol (TCP). This is UDP-glycosyltransferase 84A1 from Arabidopsis thaliana (Mouse-ear cress).